The sequence spans 165 residues: Phosphopantetheine adenylyltransferase (165 aa).

T9 is a binding site for substrate. ATP-binding positions include 9–10 (TF) and H17. Residues K41, L73, and R87 each coordinate substrate. ATP-binding positions include 88 to 90 (GLR), E98, and 123 to 129 (LQPIASR).

It belongs to the bacterial CoaD family. Homohexamer. It depends on Mg(2+) as a cofactor.

It localises to the cytoplasm. The catalysed reaction is (R)-4'-phosphopantetheine + ATP + H(+) = 3'-dephospho-CoA + diphosphate. The protein operates within cofactor biosynthesis; coenzyme A biosynthesis; CoA from (R)-pantothenate: step 4/5. Its function is as follows. Reversibly transfers an adenylyl group from ATP to 4'-phosphopantetheine, yielding dephospho-CoA (dPCoA) and pyrophosphate. The polypeptide is Phosphopantetheine adenylyltransferase (Rhizorhabdus wittichii (strain DSM 6014 / CCUG 31198 / JCM 15750 / NBRC 105917 / EY 4224 / RW1) (Sphingomonas wittichii)).